The sequence spans 561 residues: Arf-GAP domain and FG repeat-containing protein 1 (561 aa).

One can recognise an Arf-GAP domain in the interval 11 to 135; the sequence is EKHLKMLRDM…WYVPPEQAKV (125 aa). A C4-type zinc finger spans residues 29–52; it reads CFDCDQRGPTYVNMTVGSFVCTSC. At Ser167 the chain carries Phosphoserine. The tract at residues 170-193 is disordered; it reads ALHLNKGTPSQSPVVGRSQGQQQE. The segment covering 176-191 has biased composition (polar residues); the sequence is GTPSQSPVVGRSQGQQ. Phosphothreonine is present on Thr177. A phosphoserine mark is found at Ser181 and Ser362. Ser367 carries O-linked (GlcNAc) serine glycosylation. Residues 413–433 are disordered; sequence SAQTQPASSGPAPFGATPSTN.

In terms of assembly, interacts with FCHO1. Interacts with EPS15R and EPS15. In terms of processing, O-glycosylated. In terms of tissue distribution, expressed in the testes (at protein level).

Its subcellular location is the nucleus. It localises to the cytoplasmic vesicle. In terms of biological role, required for vesicle docking or fusion during acrosome biogenesis. May play a role in RNA trafficking or localization. The sequence is that of Arf-GAP domain and FG repeat-containing protein 1 (Agfg1) from Mus musculus (Mouse).